Consider the following 67-residue polypeptide: Small ribosomal subunit protein bS21 (67 aa).

This sequence belongs to the bacterial ribosomal protein bS21 family.

The sequence is that of Small ribosomal subunit protein bS21 from Nitratidesulfovibrio vulgaris (strain DP4) (Desulfovibrio vulgaris).